The following is a 352-amino-acid chain: UDP-N-acetylglucosamine--N-acetylmuramyl-(pentapeptide) pyrophosphoryl-undecaprenol N-acetylglucosamine transferase (352 aa).

Residues S195 and Q287 each contribute to the UDP-N-acetyl-alpha-D-glucosamine site.

The protein belongs to the glycosyltransferase 28 family. MurG subfamily.

Its subcellular location is the cell membrane. It catalyses the reaction Mur2Ac(oyl-L-Ala-gamma-D-Glu-L-Lys-D-Ala-D-Ala)-di-trans,octa-cis-undecaprenyl diphosphate + UDP-N-acetyl-alpha-D-glucosamine = beta-D-GlcNAc-(1-&gt;4)-Mur2Ac(oyl-L-Ala-gamma-D-Glu-L-Lys-D-Ala-D-Ala)-di-trans,octa-cis-undecaprenyl diphosphate + UDP + H(+). The protein operates within cell wall biogenesis; peptidoglycan biosynthesis. Functionally, cell wall formation. Catalyzes the transfer of a GlcNAc subunit on undecaprenyl-pyrophosphoryl-MurNAc-pentapeptide (lipid intermediate I) to form undecaprenyl-pyrophosphoryl-MurNAc-(pentapeptide)GlcNAc (lipid intermediate II). This Streptococcus pneumoniae serotype 19F (strain G54) protein is UDP-N-acetylglucosamine--N-acetylmuramyl-(pentapeptide) pyrophosphoryl-undecaprenol N-acetylglucosamine transferase.